A 302-amino-acid polypeptide reads, in one-letter code: 4-hydroxy-tetrahydrodipicolinate synthase (302 aa).

Thr-55 contributes to the pyruvate binding site. Residue Tyr-144 is the Proton donor/acceptor of the active site. The active-site Schiff-base intermediate with substrate is the Lys-172. Val-214 is a pyruvate binding site.

This sequence belongs to the DapA family. As to quaternary structure, homotetramer; dimer of dimers.

The protein resides in the cytoplasm. It carries out the reaction L-aspartate 4-semialdehyde + pyruvate = (2S,4S)-4-hydroxy-2,3,4,5-tetrahydrodipicolinate + H2O + H(+). The protein operates within amino-acid biosynthesis; L-lysine biosynthesis via DAP pathway; (S)-tetrahydrodipicolinate from L-aspartate: step 3/4. Functionally, catalyzes the condensation of (S)-aspartate-beta-semialdehyde [(S)-ASA] and pyruvate to 4-hydroxy-tetrahydrodipicolinate (HTPA). The sequence is that of 4-hydroxy-tetrahydrodipicolinate synthase from Prochlorococcus marinus (strain MIT 9303).